Reading from the N-terminus, the 478-residue chain is Zinc metalloproteinase/disintegrin (478 aa).

A signal peptide spans methionine 1–serine 20. Residues isoleucine 21–leucine 187 constitute a propeptide that is removed on maturation. Disulfide bonds link cysteine 304/cysteine 384, cysteine 344/cysteine 368, and cysteine 346/cysteine 351. Histidine 329 contacts Zn(2+). Glutamate 330 is a catalytic residue. Positions 333 and 339 each coordinate Zn(2+). A propeptide spanning residues leucine 390–leucine 405 is cleaved from the precursor. A Disintegrin domain is found at threonine 397 to alanine 478. 6 disulfides stabilise this stretch: cysteine 411-cysteine 426, cysteine 413-cysteine 421, cysteine 420-cysteine 443, cysteine 434-cysteine 440, cysteine 439-cysteine 464, and cysteine 452-cysteine 471. A Cell attachment site motif is present at residues arginine 456 to aspartate 458.

Belongs to the venom metalloproteinase (M12B) family. P-II subfamily. P-IIa sub-subfamily. As to quaternary structure, monomer. As to expression, expressed by the venom gland.

It is found in the secreted. Its function is as follows. Binds alpha-5/beta-1 (ITGAV/ITGB1), alpha-V/beta-3 (ITGAV/ITGB3) and alpha-M/beta-2 (ITGAM/ITGB2) integrins. Is a potent inhibitor of platelet aggregation induced by ADP, collagen, and thrombin. Induces neutrophil chemotaxis and inhibits the chemotaxis of human neutrophils toward fMLP, IL-8, and jarastatin itself. Directly activates an integrin-coupled signaling and modulate the MAPK pathway in different ways, leading the neutrophils to express different functional response. Induces Erk-2 translocation to nucleus and a delay of the spontaneous apoptosis of neutrophils. Increases the IL-8 mRNA levels in neutrophils. When injected simultaneously with melanoma cells in mice, jarastatin, flavoridin (FL) and kistrin (KR) significantly reduce tumor lung colonization. Inhibits mouse melanoma B16F10 cell growth in vitro. When it interacts with melanoma cells, it induces actin cytoskeleton rearrangement, increasing actin polymerization and PTK2/FAK1 phosphorylation. Interferes with NF-kappaB translocation in melanoma cells. This chain is Zinc metalloproteinase/disintegrin, found in Bothrops jararaca (Jararaca).